The chain runs to 596 residues: Transketolase-like protein 1 (596 aa).

Substrate is bound at residue His-46. Residues Ser-49 and 94–96 contribute to the thiamine diphosphate site; that span reads GWL. Asp-126 provides a ligand contact to Mg(2+). Thiamine diphosphate is bound by residues Val-127 and Asn-156. Residues Asn-156 and Leu-158 each coordinate Mg(2+). Thiamine diphosphate-binding residues include Lys-218 and His-232. 3 residues coordinate substrate: His-232, Arg-292, and Ser-319. Residues Glu-340 and Phe-366 each contribute to the thiamine diphosphate site. Glu-340 (proton donor) is an active-site residue. Residues His-390 and Asp-398 each contribute to the substrate site. Gln-402 lines the thiamine diphosphate pocket. Arg-448 is a binding site for substrate.

It belongs to the transketolase family. As to quaternary structure, homodimer. The cofactor is Mg(2+). It depends on Ca(2+) as a cofactor. Mn(2+) serves as cofactor. Requires Co(2+) as cofactor. Thiamine diphosphate is required as a cofactor.

Its subcellular location is the cytoplasm. The catalysed reaction is D-sedoheptulose 7-phosphate + D-glyceraldehyde 3-phosphate = aldehydo-D-ribose 5-phosphate + D-xylulose 5-phosphate. Functionally, catalyzes the transfer of a two-carbon ketol group from a ketose donor to an aldose acceptor, via a covalent intermediate with the cofactor thiamine pyrophosphate. This is Transketolase-like protein 1 (TKTL1) from Bos taurus (Bovine).